The sequence spans 336 residues: Fructose-1,6-bisphosphatase class 1 (336 aa).

Mg(2+)-binding residues include Glu90, Asp112, Leu114, and Asp115. Substrate contacts are provided by residues Asp115–Ser118, Asn211, and Lys277. Glu283 is a binding site for Mg(2+).

The protein belongs to the FBPase class 1 family. Homotetramer. Requires Mg(2+) as cofactor.

The protein resides in the cytoplasm. It catalyses the reaction beta-D-fructose 1,6-bisphosphate + H2O = beta-D-fructose 6-phosphate + phosphate. It participates in carbohydrate biosynthesis; gluconeogenesis. This Pseudomonas aeruginosa (strain ATCC 15692 / DSM 22644 / CIP 104116 / JCM 14847 / LMG 12228 / 1C / PRS 101 / PAO1) protein is Fructose-1,6-bisphosphatase class 1.